We begin with the raw amino-acid sequence, 344 residues long: 4'-phosphopantetheinyl transferase NpgA (344 aa).

This sequence belongs to the P-Pant transferase superfamily.

The enzyme catalyses apo-[ACP] + CoA = holo-[ACP] + adenosine 3',5'-bisphosphate + H(+). Its function is as follows. Transfers the 4'-phosphopantetheine moiety from coenzyme A to a Ser of an acyl-carrier-protein. The enzyme is able to transfer the cofactor to a broad range of enzymes with acyl- or peptidyl-carrier protein domains. Required for primary biological processes such as growth and asexual/sexual development, and activates target enzymes involved in the synthesis of metabolites such as fatty acids, polyketides and nonribosomal peptides, lysine, siderophore, penicillin, sterigmatocystin, shamixantone, dehydroaustinol, and pigments. The chain is 4'-phosphopantetheinyl transferase NpgA (npgA) from Emericella nidulans (strain FGSC A4 / ATCC 38163 / CBS 112.46 / NRRL 194 / M139) (Aspergillus nidulans).